The primary structure comprises 308 residues: Porphobilinogen deaminase (308 aa).

An S-(dipyrrolylmethanemethyl)cysteine modification is found at Cys243.

Belongs to the HMBS family. As to quaternary structure, monomer. It depends on dipyrromethane as a cofactor.

The catalysed reaction is 4 porphobilinogen + H2O = hydroxymethylbilane + 4 NH4(+). It participates in porphyrin-containing compound metabolism; protoporphyrin-IX biosynthesis; coproporphyrinogen-III from 5-aminolevulinate: step 2/4. Tetrapolymerization of the monopyrrole PBG into the hydroxymethylbilane pre-uroporphyrinogen in several discrete steps. The chain is Porphobilinogen deaminase from Mesorhizobium japonicum (strain LMG 29417 / CECT 9101 / MAFF 303099) (Mesorhizobium loti (strain MAFF 303099)).